The chain runs to 438 residues: GTPase Obg (438 aa).

One can recognise an Obg domain in the interval 2–160 (SMFLDQVTID…RKIELELKVL (159 aa)). The interval 128–147 (NIRFASPRNPAPEIAENGEP) is disordered. The OBG-type G domain maps to 161–339 (ADVGLVGFPS…LLNATADLLE (179 aa)). GTP is bound by residues 167–174 (GFPSVGKS), 192–196 (FTTLV), 214–217 (DLPG), 284–287 (NKMD), and 320–322 (SGV). Positions 174 and 194 each coordinate Mg(2+). Residues 360–438 (GFQPEGPEFT…IGNFEFEFVE (79 aa)) enclose the OCT domain.

It belongs to the TRAFAC class OBG-HflX-like GTPase superfamily. OBG GTPase family. Monomer. Requires Mg(2+) as cofactor.

It localises to the cytoplasm. Its function is as follows. An essential GTPase which binds GTP, GDP and possibly (p)ppGpp with moderate affinity, with high nucleotide exchange rates and a fairly low GTP hydrolysis rate. Plays a role in control of the cell cycle, stress response, ribosome biogenesis and in those bacteria that undergo differentiation, in morphogenesis control. This Enterococcus faecalis (strain ATCC 700802 / V583) protein is GTPase Obg.